A 424-amino-acid polypeptide reads, in one-letter code: CinA-like protein (424 aa).

Belongs to the CinA family.

This Shewanella frigidimarina (strain NCIMB 400) protein is CinA-like protein.